A 224-amino-acid polypeptide reads, in one-letter code: uncharacterized protein (224 aa).

N-linked (GlcNAc...) asparagine glycans are attached at residues Asn10, Asn70, and Asn74.

Its subcellular location is the endoplasmic reticulum. This is an uncharacterized protein from Saccharomyces cerevisiae (strain ATCC 204508 / S288c) (Baker's yeast).